We begin with the raw amino-acid sequence, 177 residues long: Large ribosomal subunit protein uL6 (177 aa).

K44 carries the post-translational modification N6-acetyllysine.

The protein belongs to the universal ribosomal protein uL6 family. In terms of assembly, part of the 50S ribosomal subunit.

This protein binds to the 23S rRNA, and is important in its secondary structure. It is located near the subunit interface in the base of the L7/L12 stalk, and near the tRNA binding site of the peptidyltransferase center. In Escherichia fergusonii (strain ATCC 35469 / DSM 13698 / CCUG 18766 / IAM 14443 / JCM 21226 / LMG 7866 / NBRC 102419 / NCTC 12128 / CDC 0568-73), this protein is Large ribosomal subunit protein uL6.